Reading from the N-terminus, the 366-residue chain is Actin-like protein 8 (366 aa).

The protein belongs to the actin family. In terms of tissue distribution, strongly expressed in testis and pancreas. Weak expression in placenta.

It is found in the cytoplasm. Its subcellular location is the cytoskeleton. This is Actin-like protein 8 (ACTL8) from Homo sapiens (Human).